The sequence spans 53 residues: Large ribosomal subunit protein bL32c (53 aa).

Belongs to the bacterial ribosomal protein bL32 family.

It localises to the plastid. The protein resides in the chloroplast. This is Large ribosomal subunit protein bL32c from Phaseolus vulgaris (Kidney bean).